A 512-amino-acid polypeptide reads, in one-letter code: MAILSLRAPGPWQAMQVWADRTLLTPHTGVTSQVLGVAAAVMTPLPGGHAAGRTREARWDAMEYDEKLARFRQAHLNPFNKQSGPRQHEQGPGEEVPDVTPEEALPELPPGEPEFRCPERVMDLGLSEDHFSRPVGLFLASDVQQLRQAIEECKQVILELPEQSEKQKDAVVRLIHLRLKLQELKDPNEDEPNIRVLLEHRFYKEKSKSVKQTCDKCNTIIWGLIQTWYTCTGCYYRCHSKCLNLISKPCVSSKVSHQAEYELNICPETGLDSQDYRCAECRAPISLRGVPSEARQCDYTGQYYCSHCHWNDLAVIPARVVHNWDFEPRKVSRCSMRYLALMVSRPVLRLREINPLLFSYVEELVEIRKLRQDILLMKPYFITCREAMEARLLLQLQDRQHFVENDEMYSVQDLLDVHAGRLGCSLTEIHTLFAKHIKLDCERCQAKGFVCELCREGDVLFPFDSHTSVCADCSAVFHRDCYYDNSTTCPKCARLSLRKQSLFQEPGPDVEA.

Met-1 carries the N-acetylmethionine modification. Residues 77–116 form a disordered region; it reads NPFNKQSGPRQHEQGPGEEVPDVTPEEALPELPPGEPEFR. Residues 95–105 are compositionally biased toward acidic residues; that stretch reads EVPDVTPEEAL. Phorbol-ester/DAG-type zinc fingers lie at residues 199–250 and 429–489; these read EHRF…SKPC and IHTL…STTC. Phosphoserine is present on Ser-501.

Belongs to the DEF8 family. In terms of assembly, interacts (via C-terminus) with PLEKHM1; this interaction is weak but increased in a RAB7A-dependent manner.

In terms of biological role, positively regulates lysosome peripheral distribution and ruffled border formation in osteoclasts. Involved in bone resorption. In Homo sapiens (Human), this protein is Differentially expressed in FDCP 8 homolog (DEF8).